A 742-amino-acid chain; its full sequence is Photosystem I P700 chlorophyll a apoprotein A2 (742 aa).

The next 8 membrane-spanning stretches (helical) occupy residues 46 to 69, 135 to 158, 175 to 199, 273 to 291, 336 to 359, 375 to 401, 423 to 445, and 525 to 543; these read LFST…FHIA, LFQG…LHLQ, LNHH…HVAI, IAHH…GHMY, LHFQ…QHMG, SALY…IFFV, ALIS…IYVH, and FLVH…LILI. 2 residues coordinate [4Fe-4S] cluster: Cys567 and Cys576. The next 2 membrane-spanning stretches (helical) occupy residues 583–604 and 651–673; these read ATYL…YWHW and LSPW…MFLI. The divinyl chlorophyll a site is built by His662, Met670, and Tyr678. Residue Trp679 coordinates phylloquinone. Residues 715–735 form a helical membrane-spanning segment; it reads LVGLTHFTVGNFVTFGAFVIA.

Belongs to the PsaA/PsaB family. As to quaternary structure, the PsaA/B heterodimer binds the P700 divinyl chlorophyll special pair and subsequent electron acceptors. PSI consists of a core antenna complex that captures photons, and an electron transfer chain that converts photonic excitation into a charge separation. The cyanobacterial PSI reaction center is composed of one copy each of PsaA,B,C,D,E,F,I,J,K,L,M and X, and forms trimeric complexes. It depends on PSI electron transfer chain: 5 divinyl chlorophyll a, 1 divinyl chlorophyll a', 2 phylloquinones and 3 4Fe-4S clusters. PSI core antenna: 90 divinyl chlorophyll a, 22 carotenoids, 3 phospholipids and 1 galactolipid. P700 is a divinyl chlorophyll a/divinyl chlorophyll a' dimer, A0 is one or more divinyl chlorophyll a, A1 is one or both phylloquinones and FX is a shared 4Fe-4S iron-sulfur center. as a cofactor.

The protein resides in the cellular thylakoid membrane. The catalysed reaction is reduced [plastocyanin] + hnu + oxidized [2Fe-2S]-[ferredoxin] = oxidized [plastocyanin] + reduced [2Fe-2S]-[ferredoxin]. Functionally, psaA and PsaB bind P700, the primary electron donor of photosystem I (PSI), as well as the electron acceptors A0, A1 and FX. PSI is a plastocyanin/cytochrome c6-ferredoxin oxidoreductase, converting photonic excitation into a charge separation, which transfers an electron from the donor P700 chlorophyll pair to the spectroscopically characterized acceptors A0, A1, FX, FA and FB in turn. Oxidized P700 is reduced on the lumenal side of the thylakoid membrane by plastocyanin or cytochrome c6. This Prochlorococcus marinus (strain NATL2A) protein is Photosystem I P700 chlorophyll a apoprotein A2.